The sequence spans 354 residues: Ubiquinol oxidase 1a, mitochondrial (354 aa).

The N-terminal 62 residues, 1 to 62, are a transit peptide targeting the mitochondrion; it reads MMITRGGAKA…RAPTIGGMRF (62 aa). The interval 68-99 is disordered; sequence LGEKTPMKEEDANQKKTENESTGGDAAGGNNK. Residues 72 to 86 show a composition bias toward basic and acidic residues; it reads TPMKEEDANQKKTEN. Residues 179-199 traverse the membrane as a helical segment; that stretch reads AMMLETVAAVPGMVGGMLLHC. Fe cation contacts are provided by glutamate 183, glutamate 222, and histidine 225. A helical transmembrane segment spans residues 241-261; it reads ALVITVQGVFFNAYFLGYLIS. The Fe cation site is built by glutamate 273, glutamate 324, and histidine 327.

Belongs to the alternative oxidase family. As to quaternary structure, homodimer; disulfide-linked. Fe cation serves as cofactor. Expressed in roots, stems, cotyledons, leaves and flowers. High expression in sepals.

The protein localises to the mitochondrion inner membrane. It carries out the reaction 2 a ubiquinol + O2 = 2 a ubiquinone + 2 H2O. Its activity is regulated as follows. When the two monomeric subunits are covalently linked by a S-S bond, the enzyme is essentially inactive. When the disulfide bond is reduced, its component sulfhydryls can associate with K-keto acids through formation of a thiohemiacetal, resulting in enzyme activation. Activated by glyoxylate, irrespective to the substitution found at Cys-127. That suggests the presence of a second activation site, possibly Cys-177. In terms of biological role, catalyzes the cyanide-resistant oxidation of ubiquinol and the reduction of molecular oxygen to water, but does not translocate protons and consequently is not linked to oxidative phosphorylation. Increases respiration when the cytochrome respiratory pathway is restricted, or in response to low temperatures. The polypeptide is Ubiquinol oxidase 1a, mitochondrial (AOX1A) (Arabidopsis thaliana (Mouse-ear cress)).